The following is a 155-amino-acid chain: Ribosomal RNA large subunit methyltransferase H (155 aa).

Residues Leu72, Gly104, and 123–128 (LSKMTF) contribute to the S-adenosyl-L-methionine site.

The protein belongs to the RNA methyltransferase RlmH family. Homodimer.

Its subcellular location is the cytoplasm. The catalysed reaction is pseudouridine(1915) in 23S rRNA + S-adenosyl-L-methionine = N(3)-methylpseudouridine(1915) in 23S rRNA + S-adenosyl-L-homocysteine + H(+). Functionally, specifically methylates the pseudouridine at position 1915 (m3Psi1915) in 23S rRNA. The polypeptide is Ribosomal RNA large subunit methyltransferase H (Cytophaga hutchinsonii (strain ATCC 33406 / DSM 1761 / CIP 103989 / NBRC 15051 / NCIMB 9469 / D465)).